The primary structure comprises 72 residues: Translation initiation factor IF-1 (72 aa).

An S1-like domain is found at 2–72 (AKDDVIEVDG…TRGRITYRFK (71 aa)).

It belongs to the IF-1 family. In terms of assembly, component of the 30S ribosomal translation pre-initiation complex which assembles on the 30S ribosome in the order IF-2 and IF-3, IF-1 and N-formylmethionyl-tRNA(fMet); mRNA recruitment can occur at any time during PIC assembly.

The protein resides in the cytoplasm. Functionally, one of the essential components for the initiation of protein synthesis. Stabilizes the binding of IF-2 and IF-3 on the 30S subunit to which N-formylmethionyl-tRNA(fMet) subsequently binds. Helps modulate mRNA selection, yielding the 30S pre-initiation complex (PIC). Upon addition of the 50S ribosomal subunit IF-1, IF-2 and IF-3 are released leaving the mature 70S translation initiation complex. In Lactococcus lactis subsp. lactis (strain IL1403) (Streptococcus lactis), this protein is Translation initiation factor IF-1.